Consider the following 168-residue polypeptide: MTANQTPQTVHYATVTWDQLHRDARLLAATLMQKHGPFRGIVAITRGGLIPAAILGREMGCRLIESVSVISYAGEEGTQHEPKVVKPPVAAGDGEGFLIVDDLVDSGVTARIVRELLPKAVFACLYAKPEGKPFTDHYVTEVAQDTWVLFPWDTAPLFVPPLVRSEGE.

5-phospho-alpha-D-ribose 1-diphosphate-binding positions include 46-47 (RG) and 101-109 (DDLVDSGVT). Asp-102 provides a ligand contact to Mg(2+). Asp-105 contacts guanine. Xanthine is bound by residues Asp-105 and Val-148. Residues 105–109 (DSGVT) and 147–148 (WV) each bind GMP.

Belongs to the purine/pyrimidine phosphoribosyltransferase family. XGPT subfamily. As to quaternary structure, homotetramer. Mg(2+) serves as cofactor.

It localises to the cell inner membrane. The catalysed reaction is GMP + diphosphate = guanine + 5-phospho-alpha-D-ribose 1-diphosphate. The enzyme catalyses XMP + diphosphate = xanthine + 5-phospho-alpha-D-ribose 1-diphosphate. It carries out the reaction IMP + diphosphate = hypoxanthine + 5-phospho-alpha-D-ribose 1-diphosphate. It functions in the pathway purine metabolism; GMP biosynthesis via salvage pathway; GMP from guanine: step 1/1. Its pathway is purine metabolism; XMP biosynthesis via salvage pathway; XMP from xanthine: step 1/1. Functionally, purine salvage pathway enzyme that catalyzes the transfer of the ribosyl-5-phosphate group from 5-phospho-alpha-D-ribose 1-diphosphate (PRPP) to the N9 position of the 6-oxopurines guanine and xanthine to form the corresponding ribonucleotides GMP (guanosine 5'-monophosphate) and XMP (xanthosine 5'-monophosphate), with the release of PPi. To a lesser extent, also acts on hypoxanthine. The sequence is that of Xanthine-guanine phosphoribosyltransferase from Gluconobacter oxydans (strain 621H) (Gluconobacter suboxydans).